A 323-amino-acid polypeptide reads, in one-letter code: SURF1-like protein (323 aa).

Residues 57-71 (DAPKSRENREKDGGK) are compositionally biased toward basic and acidic residues. The interval 57-76 (DAPKSRENREKDGGKSKKSK) is disordered. 2 helical membrane passes run 81–101 (WSTGSVLMLTIPVFAFSLGIW) and 299–319 (HLNYLTTWFTLTLVTMLMWIH).

This sequence belongs to the SURF1 family.

It is found in the mitochondrion inner membrane. Its function is as follows. Probably involved in the biogenesis of the COX complex. This chain is SURF1-like protein (sft-1), found in Caenorhabditis elegans.